We begin with the raw amino-acid sequence, 412 residues long: LL-diaminopimelate aminotransferase (412 aa).

Substrate contacts are provided by tyrosine 15 and glycine 42. Pyridoxal 5'-phosphate-binding positions include tyrosine 72, serine 108 to lysine 109, tyrosine 132, asparagine 187, tyrosine 218, and serine 246 to serine 248. Residues lysine 109, tyrosine 132, and asparagine 187 each coordinate substrate. Lysine 249 carries the N6-(pyridoxal phosphate)lysine modification. Residues arginine 257 and asparagine 292 each coordinate pyridoxal 5'-phosphate. Substrate is bound by residues asparagine 292 and arginine 388.

Belongs to the class-I pyridoxal-phosphate-dependent aminotransferase family. LL-diaminopimelate aminotransferase subfamily. As to quaternary structure, homodimer. It depends on pyridoxal 5'-phosphate as a cofactor.

It carries out the reaction (2S,6S)-2,6-diaminopimelate + 2-oxoglutarate = (S)-2,3,4,5-tetrahydrodipicolinate + L-glutamate + H2O + H(+). Its pathway is amino-acid biosynthesis; L-lysine biosynthesis via DAP pathway; LL-2,6-diaminopimelate from (S)-tetrahydrodipicolinate (aminotransferase route): step 1/1. Involved in the synthesis of meso-diaminopimelate (m-DAP or DL-DAP), required for both lysine and peptidoglycan biosynthesis. Catalyzes the direct conversion of tetrahydrodipicolinate to LL-diaminopimelate. The chain is LL-diaminopimelate aminotransferase from Synechocystis sp. (strain ATCC 27184 / PCC 6803 / Kazusa).